Consider the following 1221-residue polypeptide: DNA topoisomerase 2 (1221 aa).

ATP is bound by residues Asn65, Asn94, 122-124, 135-142, and 352-354; these read SSN, GRHGYGAK, and QNK. Positions 432-546 constitute a Toprim domain; it reads RTLIVTEGDS…SLLVRNPGFI (115 aa). Residues Glu438, Asp515, and Asp517 each coordinate Mg(2+). Positions 681-1097 constitute a Topo IIA-type catalytic domain; sequence LAHSVDGLKP…TPVQLWLGEL (417 aa). Tyr771 acts as the O-(5'-phospho-DNA)-tyrosine intermediate in catalysis. Positions 952–961 are interaction with DNA; sequence GLTQRIHING. The segment at 1158-1198 is disordered; it reads VPPPTKRGAGGRSDGDGGATAAGAAAAVGGRGEKKGPGRAG. Positions 1165 to 1177 are enriched in gly residues; the sequence is GAGGRSDGDGGAT.

This sequence belongs to the type II topoisomerase family. Homodimer. The cofactor is Mg(2+). Mn(2+) is required as a cofactor. Requires Ca(2+) as cofactor.

The protein localises to the nucleus. It carries out the reaction ATP-dependent breakage, passage and rejoining of double-stranded DNA.. Functionally, control of topological states of DNA by transient breakage and subsequent rejoining of DNA strands. Topoisomerase II makes double-strand breaks. The sequence is that of DNA topoisomerase 2 (TOP2) from Trypanosoma brucei brucei.